The following is a 593-amino-acid chain: Proteasome-associated ATPase (593 aa).

Positions Asp-5–Pro-94 form a coiled coil. Gly-281–Leu-286 contacts ATP. The disordered stretch occupies residues Gly-574 to Leu-593. Over residues Glu-584 to Leu-593 the composition is skewed to polar residues. The interval Tyr-592–Leu-593 is docks into pockets in the proteasome alpha-ring.

This sequence belongs to the AAA ATPase family. In terms of assembly, homohexamer. Assembles into a hexameric ring structure that caps the 20S proteasome core. Strongly interacts with the prokaryotic ubiquitin-like protein Pup through a hydrophobic interface; the interacting region of ARC lies in its N-terminal coiled-coil domain. There is one Pup binding site per ARC hexamer ring. Upon ATP-binding, the C-terminus of ARC interacts with the alpha-rings of the proteasome core, possibly by binding to the intersubunit pockets.

It functions in the pathway protein degradation; proteasomal Pup-dependent pathway. Functionally, ATPase which is responsible for recognizing, binding, unfolding and translocation of pupylated proteins into the bacterial 20S proteasome core particle. May be essential for opening the gate of the 20S proteasome via an interaction with its C-terminus, thereby allowing substrate entry and access to the site of proteolysis. Thus, the C-termini of the proteasomal ATPase may function like a 'key in a lock' to induce gate opening and therefore regulate proteolysis. The chain is Proteasome-associated ATPase from Salinispora arenicola (strain CNS-205).